A 217-amino-acid chain; its full sequence is MNINDVKRAVSEIKEKSPQRKFEESVEIAVNLKDVDMSNPKNRINEEILLPNGRGKDVKIAVFGSDELKSKARGVADFVFGAEDISKFAEDKKAFKKIVNQAYFFIAEATLMANIGKSLGQVLGPRGKMPRPIPPGQDPAPLIKNLKNTVKARSRNALTFHVPVGTRSMDADKISENIMTVINRITGKLERGASNIRSIYVKTTMGNAVEIKAGDEK.

This sequence belongs to the universal ribosomal protein uL1 family. As to quaternary structure, part of the 50S ribosomal subunit.

Functionally, binds directly to 23S rRNA. Probably involved in E site tRNA release. Its function is as follows. Protein L1 is also a translational repressor protein, it controls the translation of its operon by binding to its mRNA. This chain is Large ribosomal subunit protein uL1, found in Thermoplasma acidophilum (strain ATCC 25905 / DSM 1728 / JCM 9062 / NBRC 15155 / AMRC-C165).